The chain runs to 236 residues: Small ribosomal subunit protein uS3 (236 aa).

A KH type-2 domain is found at 39 to 107 (IRLYVLEELK…ETSLNIVEIH (69 aa)).

This sequence belongs to the universal ribosomal protein uS3 family. Part of the 30S ribosomal subunit. Forms a tight complex with proteins S10 and S14.

Functionally, binds the lower part of the 30S subunit head. Binds mRNA in the 70S ribosome, positioning it for translation. In Bartonella quintana (strain Toulouse) (Rochalimaea quintana), this protein is Small ribosomal subunit protein uS3.